The primary structure comprises 115 residues: Peptidyl-tRNA hydrolase (115 aa).

This sequence belongs to the PTH2 family.

Its subcellular location is the cytoplasm. The catalysed reaction is an N-acyl-L-alpha-aminoacyl-tRNA + H2O = an N-acyl-L-amino acid + a tRNA + H(+). Its function is as follows. The natural substrate for this enzyme may be peptidyl-tRNAs which drop off the ribosome during protein synthesis. This chain is Peptidyl-tRNA hydrolase, found in Archaeoglobus fulgidus (strain ATCC 49558 / DSM 4304 / JCM 9628 / NBRC 100126 / VC-16).